Consider the following 411-residue polypeptide: 1-deoxy-D-xylulose 5-phosphate reductoisomerase (411 aa).

5 residues coordinate NADPH: threonine 12, glycine 13, serine 14, isoleucine 15, and asparagine 127. Lysine 128 is a 1-deoxy-D-xylulose 5-phosphate binding site. Glutamate 129 contacts NADPH. A Mn(2+)-binding site is contributed by aspartate 153. The 1-deoxy-D-xylulose 5-phosphate site is built by serine 154, glutamate 155, serine 189, and histidine 212. Residue glutamate 155 participates in Mn(2+) binding. Glycine 218 lines the NADPH pocket. 1-deoxy-D-xylulose 5-phosphate is bound by residues serine 225, asparagine 230, lysine 231, and glutamate 234. Glutamate 234 contributes to the Mn(2+) binding site.

This sequence belongs to the DXR family. Requires Mg(2+) as cofactor. It depends on Mn(2+) as a cofactor.

It catalyses the reaction 2-C-methyl-D-erythritol 4-phosphate + NADP(+) = 1-deoxy-D-xylulose 5-phosphate + NADPH + H(+). It participates in isoprenoid biosynthesis; isopentenyl diphosphate biosynthesis via DXP pathway; isopentenyl diphosphate from 1-deoxy-D-xylulose 5-phosphate: step 1/6. Functionally, catalyzes the NADPH-dependent rearrangement and reduction of 1-deoxy-D-xylulose-5-phosphate (DXP) to 2-C-methyl-D-erythritol 4-phosphate (MEP). The sequence is that of 1-deoxy-D-xylulose 5-phosphate reductoisomerase from Colwellia psychrerythraea (strain 34H / ATCC BAA-681) (Vibrio psychroerythus).